A 100-amino-acid polypeptide reads, in one-letter code: NADH-quinone oxidoreductase subunit K (100 aa).

3 helical membrane passes run 1–21 (MIGL…GLAG), 28–48 (ILLL…GFIA), and 64–84 (FIIA…ILWF).

The protein belongs to the complex I subunit 4L family. In terms of assembly, NDH-1 is composed of 14 different subunits. Subunits NuoA, H, J, K, L, M, N constitute the membrane sector of the complex.

Its subcellular location is the cell inner membrane. It carries out the reaction a quinone + NADH + 5 H(+)(in) = a quinol + NAD(+) + 4 H(+)(out). Functionally, NDH-1 shuttles electrons from NADH, via FMN and iron-sulfur (Fe-S) centers, to quinones in the respiratory chain. The immediate electron acceptor for the enzyme in this species is believed to be ubiquinone. Couples the redox reaction to proton translocation (for every two electrons transferred, four hydrogen ions are translocated across the cytoplasmic membrane), and thus conserves the redox energy in a proton gradient. The polypeptide is NADH-quinone oxidoreductase subunit K (Helicobacter pylori (strain G27)).